A 301-amino-acid polypeptide reads, in one-letter code: Cardiolipin synthase (CMP-forming) (301 aa).

The segment at 70–93 (SGAGKAAPRPAAGAGAAAEAPGGQ) is disordered. Residues 71–93 (GAGKAAPRPAAGAGAAAEAPGGQ) show a composition bias toward low complexity. 5 consecutive transmembrane segments (helical) span residues 109–129 (IPNMLSMTRIGLAPVLGYLII), 133–153 (FNIALGVFALAGLTDLLDGFI), 190–212 (IPVPLTYMIISRDVMLIAAVFYV), 250–270 (LILVAASLAAPVFNYADSIYL), and 272–292 (ILWCFTAFTTAASAYSYYHYG).

It belongs to the CDP-alcohol phosphatidyltransferase class-I family. A divalent metal cation is required as a cofactor. In terms of tissue distribution, highly expressed in tissues such as heart, skeletal muscle and liver.

It is found in the mitochondrion inner membrane. The catalysed reaction is a CDP-1,2-diacyl-sn-glycerol + a 1,2-diacyl-sn-glycero-3-phospho-(1'-sn-glycerol) = a cardiolipin + CMP + H(+). Catalyzes the synthesis of cardiolipin (CL) (diphosphatidylglycerol) by specifically transferring a phosphatidyl group from CDP-diacylglycerol to phosphatidylglycerol (PG). CL is a key phospholipid in mitochondrial membranes and plays important roles in maintaining the functional integrity and dynamics of mitochondria under both optimal and stress conditions. This Homo sapiens (Human) protein is Cardiolipin synthase (CMP-forming) (CRLS1).